Reading from the N-terminus, the 85-residue chain is Large ribosomal subunit protein bL27 (85 aa).

The tract at residues 1-22 is disordered; that stretch reads MAHKKAGGSTRNGRDSESKRLG.

The protein belongs to the bacterial ribosomal protein bL27 family.

This chain is Large ribosomal subunit protein bL27, found in Teredinibacter turnerae (strain ATCC 39867 / T7901).